A 412-amino-acid chain; its full sequence is MPDIFTDNTDKQDSDPSRQGFEGQPNVVIVRYGELALKSTGVRNWYEKILMKNIAAMLDSRNIPYSLLRREWGRIFIETTDPRAAEAAADVFGVVSTSPALVTKPDLESAARTCAFLGTGLIREGESFAIRARRSGNHPFSSADVGRNCGDAVWDSLEKEGKHPRVNLTSPDKEIFVEMRQNLAYVYLETVKGVGGLPLGTQGSMVVLMSGGLDSPVAAWLMMKRGVMITPVYCNNSPYAEDAARERAFDCIRQLQTWAPGHQFATYEIPHGPNLRAFIGTCDRKNTCLLCKRMMYREAYEVMKKVGASGIITGSSLGQVASQTAANMHAEIYQLAIPIYHPLIAFDKSEIVDIARRIGTYDISTRPAGICTAVPERPEVKANYDLIVLEEKKLGIETMVGDALKAVKILKL.

The interval 1–22 (MPDIFTDNTDKQDSDPSRQGFE) is disordered. Residues 82 to 190 (PRAAEAAADV…QNLAYVYLET (109 aa)) form the THUMP domain. Residues 208–209 (LM), lysine 292, glycine 314, and glutamine 323 contribute to the ATP site.

It belongs to the ThiI family.

The protein resides in the cytoplasm. It carries out the reaction [ThiI sulfur-carrier protein]-S-sulfanyl-L-cysteine + a uridine in tRNA + 2 reduced [2Fe-2S]-[ferredoxin] + ATP + H(+) = [ThiI sulfur-carrier protein]-L-cysteine + a 4-thiouridine in tRNA + 2 oxidized [2Fe-2S]-[ferredoxin] + AMP + diphosphate. The enzyme catalyses [ThiS sulfur-carrier protein]-C-terminal Gly-Gly-AMP + S-sulfanyl-L-cysteinyl-[cysteine desulfurase] + AH2 = [ThiS sulfur-carrier protein]-C-terminal-Gly-aminoethanethioate + L-cysteinyl-[cysteine desulfurase] + A + AMP + 2 H(+). The protein operates within cofactor biosynthesis; thiamine diphosphate biosynthesis. Catalyzes the ATP-dependent transfer of a sulfur to tRNA to produce 4-thiouridine in position 8 of tRNAs, which functions as a near-UV photosensor. Also catalyzes the transfer of sulfur to the sulfur carrier protein ThiS, forming ThiS-thiocarboxylate. This is a step in the synthesis of thiazole, in the thiamine biosynthesis pathway. The sulfur is donated as persulfide by IscS. This is Probable tRNA sulfurtransferase from Methanosarcina acetivorans (strain ATCC 35395 / DSM 2834 / JCM 12185 / C2A).